We begin with the raw amino-acid sequence, 85 residues long: Sodium channel neurotoxin MeuNaTxalpha-2 (85 aa).

Positions 1–19 (MNYLVMISLALLLMTGVES) are cleaved as a signal peptide. The 63-residue stretch at 21–83 (RDAYIANDRN…VPIRIPGECR (63 aa)) folds into the LCN-type CS-alpha/beta domain. 4 disulfides stabilise this stretch: Cys31-Cys82, Cys35-Cys55, Cys41-Cys65, and Cys45-Cys67. Arg83 bears the Arginine amide mark.

The protein belongs to the long (4 C-C) scorpion toxin superfamily. Sodium channel inhibitor family. Alpha subfamily. As to expression, expressed by the venom gland.

Its subcellular location is the secreted. Functionally, alpha toxins bind voltage-independently at site-3 of sodium channels (Nav) and inhibit the inactivation of the activated channels, thereby blocking neuronal transmission. This toxin inhibits inactivation of Nav1.4/SCN4A (EC(50)=2.23 uM) and drosophila DmNav1 (EC(50)=220 nM). The toxin (1 uM) does not significantly shift the midpoint of activation at the two channels, but induces a significant depolarizing shift in the V(1/2) of inactivation of the channels. In addition, the toxin accelerates the recovery from fast inactivation in Nav1.4/SCN4A and DmNav1. It also shows antimicrobial activity. The chain is Sodium channel neurotoxin MeuNaTxalpha-2 from Mesobuthus eupeus (Lesser Asian scorpion).